The chain runs to 317 residues: Small ribosomal subunit protein uS2 (317 aa).

S2 is subject to N-acetylserine. 2 laminin-binding regions span residues 161–180 (IPCN…MLSR) and 205–229 (RDPE…EFQG). 2 [DE]-W-[ST] repeats span residues 230–232 (EWT) and 245–247 (DWS). Residues 242–317 (EVADWSEGVA…EWGGASADWS (76 aa)) are laminin-binding. Residues 271–284 (EAAAPSKAPAAAEG) are compositionally biased toward low complexity. The disordered stretch occupies residues 271-317 (EAAAPSKAPAAAEGFAEDWSAQPATEDWSAAPTAQATEWGGASADWS). [DE]-W-[ST] repeat units lie at residues 288–290 (DWS), 297–299 (DWS), and 315–317 (DWS).

It belongs to the universal ribosomal protein uS2 family. As to quaternary structure, monomer (37LRP) and homodimer (67LR). Component of the small ribosomal subunit. Mature ribosomes consist of a small (40S) and a large (60S) subunit. The 40S subunit contains about 33 different proteins and 1 molecule of RNA (18S). The 60S subunit contains about 49 different proteins and 3 molecules of RNA (28S, 5.8S and 5S). Interacts with rps21. Interacts with several laminins including at least lamb1. Interacts with mdk. In terms of processing, acylated. Acylation may be a prerequisite for conversion of the monomeric 37 kDa laminin receptor precursor (37LRP) to the mature dimeric 67 kDa laminin receptor (67LR), and may provide a mechanism for membrane association. Post-translationally, cleaved by stromelysin-3 (ST3) at the cell surface. Cleavage by stromelysin-3 may be a mechanism to alter cell-extracellular matrix interactions.

It is found in the cell membrane. It localises to the cytoplasm. The protein localises to the nucleus. Its function is as follows. Required for the assembly and/or stability of the 40S ribosomal subunit. Required for the processing of the 20S rRNA-precursor to mature 18S rRNA in a late step of the maturation of 40S ribosomal subunits. Also functions as a cell surface receptor for laminin. Plays a role in cell adhesion to the basement membrane and in the consequent activation of signaling transduction pathways. May play a role in cell fate determination and tissue morphogenesis. This Salmo salar (Atlantic salmon) protein is Small ribosomal subunit protein uS2 (rpsa).